A 431-amino-acid chain; its full sequence is UDP-N-acetylglucosamine 1-carboxyvinyltransferase (431 aa).

25 to 26 (KN) serves as a coordination point for phosphoenolpyruvate. R101 contributes to the UDP-N-acetyl-alpha-D-glucosamine binding site. Catalysis depends on C125, which acts as the Proton donor. Residue C125 is modified to 2-(S-cysteinyl)pyruvic acid O-phosphothioketal. UDP-N-acetyl-alpha-D-glucosamine-binding residues include D317 and I339.

The protein belongs to the EPSP synthase family. MurA subfamily.

It is found in the cytoplasm. The catalysed reaction is phosphoenolpyruvate + UDP-N-acetyl-alpha-D-glucosamine = UDP-N-acetyl-3-O-(1-carboxyvinyl)-alpha-D-glucosamine + phosphate. Its pathway is cell wall biogenesis; peptidoglycan biosynthesis. Functionally, cell wall formation. Adds enolpyruvyl to UDP-N-acetylglucosamine. This Thermobifida fusca (strain YX) protein is UDP-N-acetylglucosamine 1-carboxyvinyltransferase.